We begin with the raw amino-acid sequence, 487 residues long: 3-ketoacyl-CoA synthase 17 (487 aa).

A run of 2 helical transmembrane segments spans residues 23 to 43 (LITHFFKLMFLPLMAVLFMNV) and 57 to 77 (STGFIFVITLAIVGSIVFFMS). Residues 74–363 (FFMSRPRSIY…FFATFVAKRL (290 aa)) form the FAE domain. Residues C218, H297, H382, H386, H415, and N419 contribute to the active site.

Belongs to the thiolase-like superfamily. Chalcone/stilbene synthases family. As to expression, expressed in flowers.

It localises to the membrane. The enzyme catalyses a very-long-chain acyl-CoA + malonyl-CoA + H(+) = a very-long-chain 3-oxoacyl-CoA + CO2 + CoA. It functions in the pathway lipid metabolism; fatty acid biosynthesis. Its activity is regulated as follows. Inhibited by K3 herbicides such as alachlor, allidochlor, anilofos, cafenstrole, fentrazamide and flufenacet. Strongly inhibited by metazachlor. Its function is as follows. Active on saturated acyl-CoAs up to C22. Mediates the synthesis of VLCFAs from 20 to 26 carbons in length (e.g. C20:1, C20, C24, C26). The sequence is that of 3-ketoacyl-CoA synthase 17 from Arabidopsis thaliana (Mouse-ear cress).